The sequence spans 187 residues: Coiled-coil domain-containing protein 201 (187 aa).

Disordered stretches follow at residues 1–79 and 92–159; these read MEPG…PPAT and KESS…RAAA. Positions 111-131 form a coiled coil; that stretch reads LTQRQRQRQQQQQQQESLRAK. The segment covering 147–157 has biased composition (basic residues); it reads GRKRRDPKKRA.

This chain is Coiled-coil domain-containing protein 201, found in Homo sapiens (Human).